A 602-amino-acid chain; its full sequence is Elongation factor 4 (602 aa).

In terms of domain architecture, tr-type G spans 7 to 189; it reads RNIRNFSIIA…AIVHRIPPPK (183 aa). Residues 19 to 24 and 136 to 139 each bind GTP; these read DHGKST and NKID.

The protein belongs to the TRAFAC class translation factor GTPase superfamily. Classic translation factor GTPase family. LepA subfamily.

The protein localises to the cell inner membrane. It catalyses the reaction GTP + H2O = GDP + phosphate + H(+). Functionally, required for accurate and efficient protein synthesis under certain stress conditions. May act as a fidelity factor of the translation reaction, by catalyzing a one-codon backward translocation of tRNAs on improperly translocated ribosomes. Back-translocation proceeds from a post-translocation (POST) complex to a pre-translocation (PRE) complex, thus giving elongation factor G a second chance to translocate the tRNAs correctly. Binds to ribosomes in a GTP-dependent manner. The sequence is that of Elongation factor 4 from Stenotrophomonas maltophilia (strain R551-3).